The following is a 265-amino-acid chain: Very long chain fatty acid elongase 6 (265 aa).

Residue Asn-2 is glycosylated (N-linked (GlcNAc...) asparagine). Helical transmembrane passes span Phe-34–Met-51, Leu-70–Met-90, Phe-111–Ile-131, Lys-136–Tyr-156, Met-159–Ser-179, Phe-197–Phe-217, and Ile-232–Glu-252.

This sequence belongs to the ELO family. ELOVL6 subfamily. N-Glycosylated. Ubiquitous.

The protein resides in the endoplasmic reticulum membrane. It carries out the reaction a very-long-chain acyl-CoA + malonyl-CoA + H(+) = a very-long-chain 3-oxoacyl-CoA + CO2 + CoA. The enzyme catalyses hexadecanoyl-CoA + malonyl-CoA + H(+) = 3-oxooctadecanoyl-CoA + CO2 + CoA. The catalysed reaction is (9Z)-hexadecenoyl-CoA + malonyl-CoA + H(+) = 3-oxo-(11Z)-octadecenoyl-CoA + CO2 + CoA. It catalyses the reaction dodecanoyl-CoA + malonyl-CoA + H(+) = 3-oxotetradecanoyl-CoA + CO2 + CoA. It carries out the reaction tetradecanoyl-CoA + malonyl-CoA + H(+) = 3-oxohexadecanoyl-CoA + CO2 + CoA. The enzyme catalyses (9Z)-octadecenoyl-CoA + malonyl-CoA + H(+) = 3-oxo-(11Z)-eicosenoyl-CoA + CO2 + CoA. The catalysed reaction is (9Z,12Z)-octadecadienoyl-CoA + malonyl-CoA + H(+) = (11Z,14Z)-3-oxoicosa-11,14-dienoyl-CoA + CO2 + CoA. It catalyses the reaction (9Z,12Z,15Z)-octadecatrienoyl-CoA + malonyl-CoA + H(+) = (11Z,14Z,17Z)-3-oxoeicosatrienoyl-CoA + CO2 + CoA. The protein operates within lipid metabolism; fatty acid biosynthesis. The reaction is stimulated by the presence of HSD17B12, the enzyme catalyzing the second step of the elongation cycle. In terms of biological role, catalyzes the first and rate-limiting reaction of the four reactions that constitute the long-chain fatty acids elongation cycle. This endoplasmic reticulum-bound enzymatic process allows the addition of 2 carbons to the chain of long- and very long-chain fatty acids (VLCFAs) per cycle. Condensing enzyme that elongates fatty acids with 12, 14 and 16 carbons with higher activity toward C16:0 acyl-CoAs. Catalyzes the synthesis of unsaturated C16 long chain fatty acids and, to a lesser extent, C18:0 and those with low desaturation degree. May participate in the production of saturated and monounsaturated VLCFAs of different chain lengths that are involved in multiple biological processes as precursors of membrane lipids and lipid mediators. This Homo sapiens (Human) protein is Very long chain fatty acid elongase 6.